The chain runs to 450 residues: Glutamyl-tRNA reductase (450 aa).

Residues 45-48 (TCNR), Ser107, 112-114 (ERE), and Gln118 contribute to the substrate site. Cys46 (nucleophile) is an active-site residue. Residue 196–201 (GTGAYA) coordinates NADP(+).

It belongs to the glutamyl-tRNA reductase family. As to quaternary structure, homodimer.

It catalyses the reaction (S)-4-amino-5-oxopentanoate + tRNA(Glu) + NADP(+) = L-glutamyl-tRNA(Glu) + NADPH + H(+). It participates in porphyrin-containing compound metabolism; protoporphyrin-IX biosynthesis; 5-aminolevulinate from L-glutamyl-tRNA(Glu): step 1/2. Catalyzes the NADPH-dependent reduction of glutamyl-tRNA(Glu) to glutamate 1-semialdehyde (GSA). This chain is Glutamyl-tRNA reductase, found in Micrococcus luteus (strain ATCC 4698 / DSM 20030 / JCM 1464 / CCM 169 / CCUG 5858 / IAM 1056 / NBRC 3333 / NCIMB 9278 / NCTC 2665 / VKM Ac-2230) (Micrococcus lysodeikticus).